Reading from the N-terminus, the 307-residue chain is Oxygen-dependent coproporphyrinogen-III oxidase (307 aa).

Serine 94 serves as a coordination point for substrate. Residues histidine 98 and histidine 108 each coordinate a divalent metal cation. Catalysis depends on histidine 108, which acts as the Proton donor. Position 110-112 (asparagine 110–arginine 112) interacts with substrate. Histidine 147 and histidine 177 together coordinate a divalent metal cation. Residues tyrosine 242–glutamine 277 are important for dimerization. Position 260 to 262 (glycine 260 to arginine 262) interacts with substrate.

The protein belongs to the aerobic coproporphyrinogen-III oxidase family. Homodimer. Requires a divalent metal cation as cofactor.

The protein localises to the cytoplasm. It carries out the reaction coproporphyrinogen III + O2 + 2 H(+) = protoporphyrinogen IX + 2 CO2 + 2 H2O. It participates in porphyrin-containing compound metabolism; protoporphyrin-IX biosynthesis; protoporphyrinogen-IX from coproporphyrinogen-III (O2 route): step 1/1. In terms of biological role, involved in the heme biosynthesis. Catalyzes the aerobic oxidative decarboxylation of propionate groups of rings A and B of coproporphyrinogen-III to yield the vinyl groups in protoporphyrinogen-IX. This Chromohalobacter salexigens (strain ATCC BAA-138 / DSM 3043 / CIP 106854 / NCIMB 13768 / 1H11) protein is Oxygen-dependent coproporphyrinogen-III oxidase.